The primary structure comprises 365 residues: Protein RecA (365 aa).

73 to 80 is an ATP binding site; sequence GPESSGKT.

This sequence belongs to the RecA family.

It localises to the cytoplasm. Can catalyze the hydrolysis of ATP in the presence of single-stranded DNA, the ATP-dependent uptake of single-stranded DNA by duplex DNA, and the ATP-dependent hybridization of homologous single-stranded DNAs. It interacts with LexA causing its activation and leading to its autocatalytic cleavage. This Prochlorococcus marinus (strain MIT 9301) protein is Protein RecA.